The following is a 339-amino-acid chain: MQTLQTTSLRVVDNKLWILDQQALPQQKNWLPADNTEALVGHIHALRVRGAPLIGLSASLLLALLAEHGMTRDALGQALEVLRAARPTAVNLMNNLDRMKQALTQPDFVAALGAEALRLVQEDRELCERIARAGSELVKPGSRLLTHCNTGGLATAGVGTALGVIARAHEAGKVANVWVDETRPLLQGGRLTAWELGELGVPYQLITDSMAASLMAQGQVDAVWVGADRIAANGDVANKIGTYSLAVLAKFHNVPFYVAAPQTTLDPACPNGAAIPIEQRAAAEVTGVAGSFGAVQWAPEDARVYNPAFDVTPAALISGWVLDSGVVTPEDVANGRFAG.

Substrate-binding positions include 49–51 (RGA), arginine 86, and glutamine 187. Aspartate 228 functions as the Proton donor in the catalytic mechanism. Substrate is bound at residue 238 to 239 (NK).

This sequence belongs to the eIF-2B alpha/beta/delta subunits family. MtnA subfamily.

The enzyme catalyses 5-(methylsulfanyl)-alpha-D-ribose 1-phosphate = 5-(methylsulfanyl)-D-ribulose 1-phosphate. It functions in the pathway amino-acid biosynthesis; L-methionine biosynthesis via salvage pathway; L-methionine from S-methyl-5-thio-alpha-D-ribose 1-phosphate: step 1/6. Catalyzes the interconversion of methylthioribose-1-phosphate (MTR-1-P) into methylthioribulose-1-phosphate (MTRu-1-P). The polypeptide is Methylthioribose-1-phosphate isomerase (Cronobacter sakazakii (strain ATCC BAA-894) (Enterobacter sakazakii)).